The primary structure comprises 180 residues: Phosphoribosylaminoimidazole carboxylase (180 aa).

Positions 35, 38, 62, 65, 89, and 91 each coordinate substrate.

It belongs to the AIR carboxylase family. Class II subfamily.

The enzyme catalyses 5-amino-1-(5-phospho-D-ribosyl)imidazole-4-carboxylate + H(+) = 5-amino-1-(5-phospho-beta-D-ribosyl)imidazole + CO2. It participates in purine metabolism; IMP biosynthesis via de novo pathway; 5-amino-1-(5-phospho-D-ribosyl)imidazole-4-carboxylate from 5-amino-1-(5-phospho-D-ribosyl)imidazole (carboxylase route): step 1/1. Functionally, catalyzes the reversible conversion of 5-aminoimidazole ribonucleotide (AIR) and CO(2) to 4-carboxy-5-aminoimidazole ribonucleotide (CAIR). The protein is Phosphoribosylaminoimidazole carboxylase of Archaeoglobus fulgidus (strain ATCC 49558 / DSM 4304 / JCM 9628 / NBRC 100126 / VC-16).